Consider the following 283-residue polypeptide: Diaminopimelate epimerase (283 aa).

Substrate is bound by residues N13, Q46, and N66. C75 serves as the catalytic Proton donor. Substrate is bound by residues 76–77 (GN), N166, N199, and 217–218 (ER). Residue C226 is the Proton acceptor of the active site. 227–228 (GT) serves as a coordination point for substrate.

Belongs to the diaminopimelate epimerase family. In terms of assembly, homodimer.

It localises to the cytoplasm. It carries out the reaction (2S,6S)-2,6-diaminopimelate = meso-2,6-diaminopimelate. It participates in amino-acid biosynthesis; L-lysine biosynthesis via DAP pathway; DL-2,6-diaminopimelate from LL-2,6-diaminopimelate: step 1/1. Catalyzes the stereoinversion of LL-2,6-diaminopimelate (L,L-DAP) to meso-diaminopimelate (meso-DAP), a precursor of L-lysine and an essential component of the bacterial peptidoglycan. The chain is Diaminopimelate epimerase from Herminiimonas arsenicoxydans.